A 179-amino-acid chain; its full sequence is Probable F-box protein At3g25550 (179 aa).

The F-box domain maps to 19–55 (IPNDDVLEEIIVRLPVKTLTRFQTVSKHWRHTIKSRN).

This chain is Probable F-box protein At3g25550, found in Arabidopsis thaliana (Mouse-ear cress).